Here is a 137-residue protein sequence, read N- to C-terminus: Large ribosomal subunit protein uL16c (137 aa).

Residues 1-17 (MLSPKKTRFRRQHRGRM) are compositionally biased toward basic residues. A disordered region spans residues 1-21 (MLSPKKTRFRRQHRGRMKGLS).

The protein belongs to the universal ribosomal protein uL16 family. As to quaternary structure, part of the 50S ribosomal subunit.

It localises to the plastid. This Cuscuta obtusiflora (Peruvian dodder) protein is Large ribosomal subunit protein uL16c.